The sequence spans 123 residues: DNA-directed RNA polymerase I subunit RPA12 (123 aa).

C17, C20, C35, C38, C84, and C87 together coordinate Zn(2+). The C4-type zinc finger occupies 17 to 38 (CPDCGSVLPLPGIQDTVICSRC). Residues 80-120 (IDRRCPRCGHEGMAYHTRQMRSADEGQTVFYTCINCKFQEK) form a TFIIS-type zinc finger. The short motif at 103–104 (DE) is the Hairpin element. Zn(2+) contacts are provided by C112 and C115.

It belongs to the archaeal RpoM/eukaryotic RPA12/RPB9/RPC11 RNA polymerase family. In terms of assembly, component of the RNA polymerase I (Pol I) complex consisting of 13 subunits: a ten-subunit catalytic core composed of POLR1A/RPA1, POLR1B/RPA2, POLR1C/RPAC1, POLR1D/RPAC2, POLR1H/RPA12, POLR2E/RPABC1, POLR2F/RPABC2, POLR2H/RPABC3, POLR2K/RPABC4 and POLR2L/RPABC5; a mobile stalk subunit POLR1F/RPA43 protruding from the core and additional subunits homologous to general transcription factors POLR1E/RPA49 and POLR1G/RPA34. Part of Pol I pre-initiation complex (PIC), in which Pol I core assembles with RRN3 and promoter-bound UTBF and SL1/TIF-IB complex.

The protein resides in the nucleus. It localises to the nucleolus. Functionally, core component of RNA polymerase I (Pol I), a DNA-dependent RNA polymerase which synthesizes ribosomal RNA precursors using the four ribonucleoside triphosphates as substrates. Can mediate Pol I proofreading of the nascent RNA transcript. Anchors into the Pol I active site to monitor transcription fidelity and cleave mis-incorporated 5'-ribonucleotides. This chain is DNA-directed RNA polymerase I subunit RPA12, found in Mus musculus (Mouse).